The sequence spans 599 residues: Sulfite reductase [NADPH] flavoprotein alpha-component (599 aa).

The Flavodoxin-like domain maps to 63–201; the sequence is ITVISASQTG…LATAWRKQVV (139 aa). Residues 69-74, 116-119, and 152-161 each bind FMN; these read SQTGNA, STQG, and LGDTSYENFC. In terms of domain architecture, FAD-binding FR-type spans 234-448; that stretch reads EQPLTAQLAV…IEHNDNFRLP (215 aa). Residues Thr-322, His-356, 386–389, 404–406, Tyr-410, and 419–422 each bind FAD; these read RLYS, TVG, and GGAS. NADP(+) contacts are provided by residues 519 to 520, 525 to 529, and Asp-561; these read SR and KVYVQ. Tyr-599 is a binding site for FAD.

It belongs to the NADPH-dependent sulphite reductase flavoprotein subunit CysJ family. The protein in the N-terminal section; belongs to the flavodoxin family. This sequence in the C-terminal section; belongs to the flavoprotein pyridine nucleotide cytochrome reductase family. In terms of assembly, alpha(8)-beta(8). The alpha component is a flavoprotein, the beta component is a hemoprotein. The cofactor is FAD. It depends on FMN as a cofactor.

The enzyme catalyses hydrogen sulfide + 3 NADP(+) + 3 H2O = sulfite + 3 NADPH + 4 H(+). The protein operates within sulfur metabolism; hydrogen sulfide biosynthesis; hydrogen sulfide from sulfite (NADPH route): step 1/1. Functionally, component of the sulfite reductase complex that catalyzes the 6-electron reduction of sulfite to sulfide. This is one of several activities required for the biosynthesis of L-cysteine from sulfate. The flavoprotein component catalyzes the electron flow from NADPH -&gt; FAD -&gt; FMN to the hemoprotein component. The sequence is that of Sulfite reductase [NADPH] flavoprotein alpha-component from Serratia proteamaculans (strain 568).